The sequence spans 1079 residues: Isoleucine--tRNA ligase (1079 aa).

Residues 53–63 (PFANGLPHYGH) carry the 'HIGH' region motif. A 'KMSKS' region motif is present at residues 611–615 (KLSKR). Lys-614 provides a ligand contact to ATP.

Belongs to the class-I aminoacyl-tRNA synthetase family. IleS type 2 subfamily. As to quaternary structure, monomer. Zn(2+) is required as a cofactor.

Its subcellular location is the cytoplasm. The catalysed reaction is tRNA(Ile) + L-isoleucine + ATP = L-isoleucyl-tRNA(Ile) + AMP + diphosphate. Functionally, catalyzes the attachment of isoleucine to tRNA(Ile). As IleRS can inadvertently accommodate and process structurally similar amino acids such as valine, to avoid such errors it has two additional distinct tRNA(Ile)-dependent editing activities. One activity is designated as 'pretransfer' editing and involves the hydrolysis of activated Val-AMP. The other activity is designated 'posttransfer' editing and involves deacylation of mischarged Val-tRNA(Ile). In Rickettsia canadensis (strain McKiel), this protein is Isoleucine--tRNA ligase.